The chain runs to 393 residues: Thermostable carboxypeptidase 2 (393 aa).

The Zn(2+) site is built by H104, D109, and H245. The active-site Proton donor is Y302. E373 functions as the Nucleophile in the catalytic mechanism.

Belongs to the peptidase M20 family. As to quaternary structure, homotetramer. It depends on Zn(2+) as a cofactor.

Functionally, can release basic, acidic, aromatic, and, to a lesser extent, aliphatic amino acids. This chain is Thermostable carboxypeptidase 2 (cpsA2), found in Saccharolobus solfataricus (strain ATCC 35092 / DSM 1617 / JCM 11322 / P2) (Sulfolobus solfataricus).